The primary structure comprises 55 residues: ATP synthase F(0) complex subunit 8 (55 aa).

A helical membrane pass occupies residues 10 to 32 (FFTMLTTWLTFLLLIQPKLLSFI).

Belongs to the ATPase protein 8 family. As to quaternary structure, component of the ATP synthase complex composed at least of ATP5F1A/subunit alpha, ATP5F1B/subunit beta, ATP5MC1/subunit c (homooctomer), MT-ATP6/subunit a, MT-ATP8/subunit 8, ATP5ME/subunit e, ATP5MF/subunit f, ATP5MG/subunit g, ATP5MK/subunit k, ATP5MJ/subunit j, ATP5F1C/subunit gamma, ATP5F1D/subunit delta, ATP5F1E/subunit epsilon, ATP5PF/subunit F6, ATP5PB/subunit b, ATP5PD/subunit d, ATP5PO/subunit OSCP. ATP synthase complex consists of a soluble F(1) head domain (subunits alpha(3) and beta(3)) - the catalytic core - and a membrane F(0) domain - the membrane proton channel (subunits c, a, 8, e, f, g, k and j). These two domains are linked by a central stalk (subunits gamma, delta, and epsilon) rotating inside the F1 region and a stationary peripheral stalk (subunits F6, b, d, and OSCP).

Its subcellular location is the mitochondrion membrane. Functionally, subunit 8, of the mitochondrial membrane ATP synthase complex (F(1)F(0) ATP synthase or Complex V) that produces ATP from ADP in the presence of a proton gradient across the membrane which is generated by electron transport complexes of the respiratory chain. ATP synthase complex consist of a soluble F(1) head domain - the catalytic core - and a membrane F(1) domain - the membrane proton channel. These two domains are linked by a central stalk rotating inside the F(1) region and a stationary peripheral stalk. During catalysis, ATP synthesis in the catalytic domain of F(1) is coupled via a rotary mechanism of the central stalk subunits to proton translocation. In vivo, can only synthesize ATP although its ATP hydrolase activity can be activated artificially in vitro. Part of the complex F(0) domain. The polypeptide is ATP synthase F(0) complex subunit 8 (Guira guira (Guira cuckoo)).